We begin with the raw amino-acid sequence, 470 residues long: MTVRTRFAPSPTGFLHVGGVRTALFSWLYAKHHNGQFILRIEDTDRERSTQESVQAILDGMAWLGLNFDEGPYYQTERYARYQQVAQQLLKEGKAYRCQCSKERLEALREAQLAAKEKPRYDGHCRNQTLPDSGVPYVIRFRNPDAGIVSFHDEVYGDIHVDNSELDDLILVRSDGHPTYNFAVVIDDWDMKITHVIRGDDHINNTPRQINLFKALDAPVPVFAHLPMILGEDGKRLSKRHGAVSVLQFKELGVLPHALLNYLVRLGWSHGDQEIFSVQEMITSFDLKNVSRGVSSFNYDKLYWLNQHYQKSDSPESVANALQWHFEQAGIDLNQGPDLKDLVAVQAERCKSLAEMCQISQYFYTDTIEYNEDAVKKHLRPVVLEPLMVLHERLKALDEWKNDKIQECINDVSLQFDLNLGKIAQPLRVAVTGSGTSPSIDMTLALLGKNKSIKRLEDALEKIRARASAV.

Positions 9-19 (PSPTGFLHVGG) match the 'HIGH' region motif. Positions 236-240 (RLSKR) match the 'KMSKS' region motif. Lys239 is an ATP binding site.

The protein belongs to the class-I aminoacyl-tRNA synthetase family. Glutamate--tRNA ligase type 1 subfamily. Monomer.

It localises to the cytoplasm. The enzyme catalyses tRNA(Glu) + L-glutamate + ATP = L-glutamyl-tRNA(Glu) + AMP + diphosphate. Functionally, catalyzes the attachment of glutamate to tRNA(Glu) in a two-step reaction: glutamate is first activated by ATP to form Glu-AMP and then transferred to the acceptor end of tRNA(Glu). This chain is Glutamate--tRNA ligase, found in Legionella pneumophila (strain Corby).